A 240-amino-acid polypeptide reads, in one-letter code: Ribonuclease HII (240 aa).

An RNase H type-2 domain is found at 21 to 210 (GLVAGVDEAG…VAAAVQRTVV (190 aa)). The a divalent metal cation site is built by aspartate 27, glutamate 28, and aspartate 119.

It belongs to the RNase HII family. Requires Mn(2+) as cofactor. It depends on Mg(2+) as a cofactor.

It is found in the cytoplasm. It catalyses the reaction Endonucleolytic cleavage to 5'-phosphomonoester.. Functionally, endonuclease that specifically degrades the RNA of RNA-DNA hybrids. The sequence is that of Ribonuclease HII from Paracidovorax citrulli (strain AAC00-1) (Acidovorax citrulli).